A 223-amino-acid polypeptide reads, in one-letter code: Deoxyribose-phosphate aldolase (223 aa).

The active-site Proton donor/acceptor is Asp-91. Catalysis depends on Lys-153, which acts as the Schiff-base intermediate with acetaldehyde. Lys-182 (proton donor/acceptor) is an active-site residue.

The protein belongs to the DeoC/FbaB aldolase family. DeoC type 1 subfamily.

Its subcellular location is the cytoplasm. It carries out the reaction 2-deoxy-D-ribose 5-phosphate = D-glyceraldehyde 3-phosphate + acetaldehyde. Its pathway is carbohydrate degradation; 2-deoxy-D-ribose 1-phosphate degradation; D-glyceraldehyde 3-phosphate and acetaldehyde from 2-deoxy-alpha-D-ribose 1-phosphate: step 2/2. Functionally, catalyzes a reversible aldol reaction between acetaldehyde and D-glyceraldehyde 3-phosphate to generate 2-deoxy-D-ribose 5-phosphate. The protein is Deoxyribose-phosphate aldolase of Streptococcus pyogenes serotype M12 (strain MGAS2096).